A 247-amino-acid chain; its full sequence is Adenosylcobinamide-GDP ribazoletransferase (247 aa).

The next 5 membrane-spanning stretches (helical) occupy residues 34–54, 59–79, 113–133, 138–158, and 194–214; these read IITF…VFMV, CGVP…TGGF, GGLA…ELTL, ILAS…LLMY, and VLLP…AIFI.

This sequence belongs to the CobS family. Mg(2+) serves as cofactor.

It is found in the cell inner membrane. The catalysed reaction is alpha-ribazole + adenosylcob(III)inamide-GDP = adenosylcob(III)alamin + GMP + H(+). It carries out the reaction alpha-ribazole 5'-phosphate + adenosylcob(III)inamide-GDP = adenosylcob(III)alamin 5'-phosphate + GMP + H(+). It participates in cofactor biosynthesis; adenosylcobalamin biosynthesis; adenosylcobalamin from cob(II)yrinate a,c-diamide: step 7/7. Joins adenosylcobinamide-GDP and alpha-ribazole to generate adenosylcobalamin (Ado-cobalamin). Also synthesizes adenosylcobalamin 5'-phosphate from adenosylcobinamide-GDP and alpha-ribazole 5'-phosphate. The protein is Adenosylcobinamide-GDP ribazoletransferase of Escherichia coli O127:H6 (strain E2348/69 / EPEC).